The following is a 45-amino-acid chain: Photosystem II reaction center protein K (45 aa).

The propeptide occupies 1 to 8 (MFSINFLG). The chain crosses the membrane as a helical span at residues 17–37 (FDPIVDVLPIIPLLFLLLAFV).

It belongs to the PsbK family. PSII is composed of 1 copy each of membrane proteins PsbA, PsbB, PsbC, PsbD, PsbE, PsbF, PsbH, PsbI, PsbJ, PsbK, PsbL, PsbM, PsbT, PsbY, PsbZ, Psb30/Ycf12, at least 3 peripheral proteins of the oxygen-evolving complex and a large number of cofactors. It forms dimeric complexes.

It is found in the plastid. The protein localises to the chloroplast thylakoid membrane. One of the components of the core complex of photosystem II (PSII). PSII is a light-driven water:plastoquinone oxidoreductase that uses light energy to abstract electrons from H(2)O, generating O(2) and a proton gradient subsequently used for ATP formation. It consists of a core antenna complex that captures photons, and an electron transfer chain that converts photonic excitation into a charge separation. The protein is Photosystem II reaction center protein K of Euglena viridis (Cercaria viridis).